A 488-amino-acid polypeptide reads, in one-letter code: Glutamate synthase [NADPH] small chain (488 aa).

In terms of domain architecture, 4Fe-4S ferredoxin-type spans 38–69 (ESLRQQATRCMDCGIPFCHNGCPLGNLIPEWN).

It depends on [4Fe-4S] cluster as a cofactor.

It carries out the reaction 2 L-glutamate + NADP(+) = L-glutamine + 2-oxoglutarate + NADPH + H(+). It functions in the pathway amino-acid biosynthesis; L-glutamate biosynthesis via GLT pathway; L-glutamate from 2-oxoglutarate and L-glutamine (NADP(+) route): step 1/1. The sequence is that of Glutamate synthase [NADPH] small chain (gltD) from Mycobacterium tuberculosis (strain CDC 1551 / Oshkosh).